A 386-amino-acid chain; its full sequence is 1-deoxy-D-xylulose 5-phosphate reductoisomerase (386 aa).

Residues Thr10, Gly11, Ser12, Ile13, Gly36, Asn38, and Asn122 each contribute to the NADPH site. 1-deoxy-D-xylulose 5-phosphate is bound at residue Lys123. Glu124 contributes to the NADPH binding site. Asp148 contributes to the Mn(2+) binding site. Positions 149, 150, 174, and 197 each coordinate 1-deoxy-D-xylulose 5-phosphate. Glu150 lines the Mn(2+) pocket. Residue Gly203 participates in NADPH binding. 4 residues coordinate 1-deoxy-D-xylulose 5-phosphate: Ser210, Asn215, Lys216, and Glu219. A Mn(2+)-binding site is contributed by Glu219.

It belongs to the DXR family. The cofactor is Mg(2+). It depends on Mn(2+) as a cofactor.

It catalyses the reaction 2-C-methyl-D-erythritol 4-phosphate + NADP(+) = 1-deoxy-D-xylulose 5-phosphate + NADPH + H(+). It functions in the pathway isoprenoid biosynthesis; isopentenyl diphosphate biosynthesis via DXP pathway; isopentenyl diphosphate from 1-deoxy-D-xylulose 5-phosphate: step 1/6. Its function is as follows. Catalyzes the NADPH-dependent rearrangement and reduction of 1-deoxy-D-xylulose-5-phosphate (DXP) to 2-C-methyl-D-erythritol 4-phosphate (MEP). This is 1-deoxy-D-xylulose 5-phosphate reductoisomerase from Geobacter sulfurreducens (strain ATCC 51573 / DSM 12127 / PCA).